Here is a 734-residue protein sequence, read N- to C-terminus: Photosystem I P700 chlorophyll a apoprotein A2 (734 aa).

A run of 8 helical transmembrane segments spans residues 46–69 (IFAS…FHVA), 135–158 (LYTG…LHLQ), 175–199 (LNHH…HVAI), 273–291 (IAHH…GHMY), 330–353 (IHFQ…QHMY), 369–395 (AALY…IFFI), 417–439 (AIIS…LYVH), and 517–535 (FLVH…LILV). The [4Fe-4S] cluster site is built by C559 and C568. Helical transmembrane passes span 575–596 (AFYL…YWHW) and 643–665 (LSVW…MFLI). Positions 654, 662, and 670 each coordinate chlorophyll a. Residue W671 participates in phylloquinone binding. The helical transmembrane segment at 707–727 (LVGLAHFSVGYIFTYAAFLIA) threads the bilayer.

This sequence belongs to the PsaA/PsaB family. The PsaA/B heterodimer binds the P700 chlorophyll special pair and subsequent electron acceptors. PSI consists of a core antenna complex that captures photons, and an electron transfer chain that converts photonic excitation into a charge separation. The eukaryotic PSI reaction center is composed of at least 11 subunits. It depends on P700 is a chlorophyll a/chlorophyll a' dimer, A0 is one or more chlorophyll a, A1 is one or both phylloquinones and FX is a shared 4Fe-4S iron-sulfur center. as a cofactor.

Its subcellular location is the plastid. It is found in the chloroplast thylakoid membrane. It catalyses the reaction reduced [plastocyanin] + hnu + oxidized [2Fe-2S]-[ferredoxin] = oxidized [plastocyanin] + reduced [2Fe-2S]-[ferredoxin]. Functionally, psaA and PsaB bind P700, the primary electron donor of photosystem I (PSI), as well as the electron acceptors A0, A1 and FX. PSI is a plastocyanin-ferredoxin oxidoreductase, converting photonic excitation into a charge separation, which transfers an electron from the donor P700 chlorophyll pair to the spectroscopically characterized acceptors A0, A1, FX, FA and FB in turn. Oxidized P700 is reduced on the lumenal side of the thylakoid membrane by plastocyanin. This is Photosystem I P700 chlorophyll a apoprotein A2 from Dioscorea elephantipes (Elephant's foot yam).